The chain runs to 141 residues: uncharacterized protein (141 aa).

The 105-residue stretch at 8–112 (IGQVFKTKSL…VLDKQPKRNE (105 aa)) folds into the MaoC-like domain.

This is an uncharacterized protein from Bacillus subtilis (strain 168).